The sequence spans 105 residues: Large ribosomal subunit protein uL24 (105 aa).

The protein belongs to the universal ribosomal protein uL24 family. Part of the 50S ribosomal subunit.

In terms of biological role, one of two assembly initiator proteins, it binds directly to the 5'-end of the 23S rRNA, where it nucleates assembly of the 50S subunit. One of the proteins that surrounds the polypeptide exit tunnel on the outside of the subunit. The polypeptide is Large ribosomal subunit protein uL24 (Hahella chejuensis (strain KCTC 2396)).